Consider the following 338-residue polypeptide: Mycothiol acetyltransferase (338 aa).

N-acetyltransferase domains follow at residues 29-173 (PETY…HQLP) and 181-338 (ISLR…NKFQ). A 1D-myo-inositol 2-(L-cysteinylamino)-2-deoxy-alpha-D-glucopyranoside-binding site is contributed by D55. 105–107 (LVV) serves as a coordination point for acetyl-CoA. E208, K248, and E261 together coordinate 1D-myo-inositol 2-(L-cysteinylamino)-2-deoxy-alpha-D-glucopyranoside. Residues 265-267 (VGI) and 272-278 (QGKGLGK) each bind acetyl-CoA. Y299 contributes to the 1D-myo-inositol 2-(L-cysteinylamino)-2-deoxy-alpha-D-glucopyranoside binding site.

It belongs to the acetyltransferase family. MshD subfamily. In terms of assembly, monomer.

The catalysed reaction is 1D-myo-inositol 2-(L-cysteinylamino)-2-deoxy-alpha-D-glucopyranoside + acetyl-CoA = mycothiol + CoA + H(+). Its function is as follows. Catalyzes the transfer of acetyl from acetyl-CoA to desacetylmycothiol (Cys-GlcN-Ins) to form mycothiol. This chain is Mycothiol acetyltransferase, found in Renibacterium salmoninarum (strain ATCC 33209 / DSM 20767 / JCM 11484 / NBRC 15589 / NCIMB 2235).